Here is a 492-residue protein sequence, read N- to C-terminus: E1B 55 kDa protein (492 aa).

The interval 22–112 (ENMEGSQDED…ERNPSGNNSR (91 aa)) is disordered. Low complexity predominate over residues 34–44 (RLLASAASGSS). Phosphoserine occurs at positions 486 and 487. T491 is modified (phosphothreonine).

Belongs to the adenoviridae E1B 55 kDa protein family. In terms of assembly, interacts with host PML-4 and PML-5; this interaction promotes efficient subnuclear targeting of E1B-55K to PML nuclear bodies. Interacts with E4-ORF3 protein. Interacts with E4-ORF6 protein.

The protein localises to the host nucleus. The protein resides in the host cytoplasm. In terms of biological role, plays a major role to prevent cellular inhibition of viral genome replication. Assembles an SCF-like E3 ubiquitin ligase complex based on the cellular proteins ELOB, ELOC, CUL5 and RBX1, in cooperation with viral E4orf6. This viral RING-type ligase ubiquitinates cellular substrates and targets them to proteasomal degradation: TP53/p53, LIG4, MRE11-RAD50-NBS1 (MRN) complex, ITGA3, DAXX and BLM. E1B-55K probably acts as the substrate-specific adapter of the SCF-like E3 ubiquitin ligase complex. Degradation of host TP53/p53 activity is essential for preventing E1A-induced TP53 accumulation that would otherwise lead to cell apoptosis and growth arrest. E1B-55K also inactivates TP53 transcription-factor activity by binding its transactivation domain. E1B-55K also functions as a SUMO1 E3 ligase for TP53 which causes the latter to be sequestered in promyelocytic leukemia (PML) nuclear bodies thereby contributing to maximal inhibition of TP53 function. The chain is E1B 55 kDa protein from Human adenovirus B serotype 7 (HAdV-7).